A 198-amino-acid chain; its full sequence is Peptidyl-tRNA hydrolase (198 aa).

Tyr-15 contributes to the tRNA binding site. His-20 acts as the Proton acceptor in catalysis. 3 residues coordinate tRNA: Phe-66, Asn-68, and Asn-114.

The protein belongs to the PTH family. In terms of assembly, monomer.

It is found in the cytoplasm. The catalysed reaction is an N-acyl-L-alpha-aminoacyl-tRNA + H2O = an N-acyl-L-amino acid + a tRNA + H(+). Functionally, hydrolyzes ribosome-free peptidyl-tRNAs (with 1 or more amino acids incorporated), which drop off the ribosome during protein synthesis, or as a result of ribosome stalling. Its function is as follows. Catalyzes the release of premature peptidyl moieties from peptidyl-tRNA molecules trapped in stalled 50S ribosomal subunits, and thus maintains levels of free tRNAs and 50S ribosomes. The sequence is that of Peptidyl-tRNA hydrolase from Cupriavidus taiwanensis (strain DSM 17343 / BCRC 17206 / CCUG 44338 / CIP 107171 / LMG 19424 / R1) (Ralstonia taiwanensis (strain LMG 19424)).